Here is a 154-residue protein sequence, read N- to C-terminus: 6,7-dimethyl-8-ribityllumazine synthase (154 aa).

5-amino-6-(D-ribitylamino)uracil-binding positions include Phe23, 57 to 59 (AFE), and 81 to 83 (AVI). 86–87 (ST) lines the (2S)-2-hydroxy-3-oxobutyl phosphate pocket. Residue His89 is the Proton donor of the active site. Residue Phe114 coordinates 5-amino-6-(D-ribitylamino)uracil. Arg128 contacts (2S)-2-hydroxy-3-oxobutyl phosphate.

The protein belongs to the DMRL synthase family.

The catalysed reaction is (2S)-2-hydroxy-3-oxobutyl phosphate + 5-amino-6-(D-ribitylamino)uracil = 6,7-dimethyl-8-(1-D-ribityl)lumazine + phosphate + 2 H2O + H(+). The protein operates within cofactor biosynthesis; riboflavin biosynthesis; riboflavin from 2-hydroxy-3-oxobutyl phosphate and 5-amino-6-(D-ribitylamino)uracil: step 1/2. Its function is as follows. Catalyzes the formation of 6,7-dimethyl-8-ribityllumazine by condensation of 5-amino-6-(D-ribitylamino)uracil with 3,4-dihydroxy-2-butanone 4-phosphate. This is the penultimate step in the biosynthesis of riboflavin. This is 6,7-dimethyl-8-ribityllumazine synthase from Campylobacter jejuni subsp. jejuni serotype O:2 (strain ATCC 700819 / NCTC 11168).